Reading from the N-terminus, the 141-residue chain is Large ribosomal subunit protein uL11 (141 aa).

The protein belongs to the universal ribosomal protein uL11 family. Part of the ribosomal stalk of the 50S ribosomal subunit. Interacts with L10 and the large rRNA to form the base of the stalk. L10 forms an elongated spine to which L12 dimers bind in a sequential fashion forming a multimeric L10(L12)X complex. In terms of processing, one or more lysine residues are methylated.

Functionally, forms part of the ribosomal stalk which helps the ribosome interact with GTP-bound translation factors. This Chlorobaculum parvum (strain DSM 263 / NCIMB 8327) (Chlorobium vibrioforme subsp. thiosulfatophilum) protein is Large ribosomal subunit protein uL11.